A 208-amino-acid polypeptide reads, in one-letter code: Thymidylate kinase (208 aa).

Residue 7–14 coordinates ATP; that stretch reads GIDGSGKS.

This sequence belongs to the thymidylate kinase family.

It carries out the reaction dTMP + ATP = dTDP + ADP. Phosphorylation of dTMP to form dTDP in both de novo and salvage pathways of dTTP synthesis. The sequence is that of Thymidylate kinase from Kosmotoga olearia (strain ATCC BAA-1733 / DSM 21960 / TBF 19.5.1).